The chain runs to 150 residues: Large ribosomal subunit protein bL9 (150 aa).

It belongs to the bacterial ribosomal protein bL9 family.

Binds to the 23S rRNA. The polypeptide is Large ribosomal subunit protein bL9 (Buchnera aphidicola subsp. Schizaphis graminum (strain Sg)).